A 233-amino-acid chain; its full sequence is 2,3,4,5-tetrahydropyridine-2,6-dicarboxylate N-acetyltransferase (233 aa).

This sequence belongs to the transferase hexapeptide repeat family. DapH subfamily.

The enzyme catalyses (S)-2,3,4,5-tetrahydrodipicolinate + acetyl-CoA + H2O = L-2-acetamido-6-oxoheptanedioate + CoA. It functions in the pathway amino-acid biosynthesis; L-lysine biosynthesis via DAP pathway; LL-2,6-diaminopimelate from (S)-tetrahydrodipicolinate (acetylase route): step 1/3. Its function is as follows. Catalyzes the transfer of an acetyl group from acetyl-CoA to tetrahydrodipicolinate. This Enterococcus faecalis (strain ATCC 700802 / V583) protein is 2,3,4,5-tetrahydropyridine-2,6-dicarboxylate N-acetyltransferase.